We begin with the raw amino-acid sequence, 333 residues long: Phenylalanine--tRNA ligase alpha subunit (333 aa).

E258 is a binding site for Mg(2+).

The protein belongs to the class-II aminoacyl-tRNA synthetase family. Phe-tRNA synthetase alpha subunit type 1 subfamily. Tetramer of two alpha and two beta subunits. Requires Mg(2+) as cofactor.

Its subcellular location is the cytoplasm. The enzyme catalyses tRNA(Phe) + L-phenylalanine + ATP = L-phenylalanyl-tRNA(Phe) + AMP + diphosphate + H(+). The sequence is that of Phenylalanine--tRNA ligase alpha subunit from Wigglesworthia glossinidia brevipalpis.